The primary structure comprises 147 residues: RxLR effector protein Avr3a (147 aa).

Positions 1 to 21 (MRLAIMLSATAVAINFATCSA) are cleaved as a signal peptide. A RxLR-dEER motif is present at residues 44 to 59 (RLLRKNEENEETSEER). Lys48 carries the post-translational modification N6-acetyllysine. An effector domain region spans residues 77-147 (ALTKRADAKK…YMMHLGLTGY (71 aa)).

The protein belongs to the RxLR effector family. Forms homodimers via the RxLR-dEER motif. Interacts with host E3 ligase CMPG1. Interacts with host DRP2. Post-translationally, proteolytically cleaved. The cleavage site directly after the RxLR sequence and the high conservation among other effector proteins suggest that the RxLR motif might play a crucial role in the intracellular processing before secretion. In terms of processing, glycosylated. N-acetylated at Lys-48 after cleavage.

The protein localises to the secreted. Its subcellular location is the host cytoplasm. The protein resides in the host endosome. Multifunctional effector that can suppress host BAK1/SERK3-mediated immunity through at least two different pathways. Manipulates plant immunity by targeting and stabilizing host E3 ligase CMPG1. Preventing the normal 26S proteasome-dependent degradation of potato CMPG1, and thus potentially of its protein substrates in the host cell, further abolishes host cell death during the biotrophic phase of infection. Also associates with the dynamin-related protein 2 (DRP2), a plant GTPase involved in immune receptor-mediated endocytosis. The Avr3A(KI) form is recognized by R3a which triggers R3a-mediated hypersensitivity and suppresses INF1-induced cell death. The sequence is that of RxLR effector protein Avr3a from Phytophthora infestans (Potato late blight agent).